Reading from the N-terminus, the 82-residue chain is Turripeptide Gsp9.1 (82 aa).

The first 23 residues, 1 to 23 (MMAKLMITVMMVLLLSLQQGADG), serve as a signal peptide directing secretion. Residues 24–46 (RSKRWRKNQMAASSIMRNLITAR) constitute a propeptide that is removed on maturation. 4-hydroxyproline occurs at positions 49 and 50. Intrachain disulfides connect cysteine 53–cysteine 68, cysteine 58–cysteine 72, and cysteine 64–cysteine 79. Residues glutamate 60 and glutamate 63 each carry the 4-carboxyglutamate modification.

Belongs to the Pg turripeptide superfamily. Expressed by the venom duct.

It localises to the secreted. In Gemmula speciosa (Splendid gem-turris), this protein is Turripeptide Gsp9.1.